The primary structure comprises 1597 residues: Mitogen-activated protein kinase kinase kinase 4 (1597 aa).

Disordered stretches follow at residues 1–128 and 424–465; these read MRDA…VETV and SPRP…PRVP. Positions 59–69 are enriched in acidic residues; it reads SDPEDFSDETN. The residue at position 77 (Ser77) is a Phosphoserine. A compositionally biased stretch (basic residues) spans 84–94; sequence QMKRLSAKHQR. Phosphoserine is present on Ser424. The residue at position 440 (Thr440) is a Phosphothreonine. The residue at position 449 (Ser449) is a Phosphoserine. A compositionally biased stretch (acidic residues) spans 449–458; it reads SGTEESDEEP. Phosphothreonine is present on Thr451. Phosphoserine occurs at positions 454 and 492. Disordered stretches follow at residues 1137 to 1157, 1190 to 1220, and 1233 to 1263; these read RPVKVPRCHSDPPNPHLIIPT, AAGRPGPGGGDSVPAKPVNTAPDTRGSSVPE, and FRSLSRHSSPTEERDEPAYPRSDSSGSTRRS. Residues 1210–1219 show a composition bias toward polar residues; it reads APDTRGSSVP. 2 positions are modified to phosphoserine: Ser1241 and Ser1263. Residues 1241–1250 are compositionally biased toward basic and acidic residues; the sequence is SPTEERDEPA. Positions 1332-1590 constitute a Protein kinase domain; sequence WQRGNKIGEG…ASQLLDHAFV (259 aa). ATP-binding positions include 1338-1346 and Lys1361; that span reads IGEGQYGKV. Asp1452 (proton acceptor) is an active-site residue.

This sequence belongs to the protein kinase superfamily. STE Ser/Thr protein kinase family. MAP kinase kinase kinase subfamily. As to quaternary structure, monomer and homodimer. Homodimerization enhances kinase activity. Interacts with CDC42. Interacts with TRAF4; this promotes homodimerization. Binds both upstream activators and downstream substrates in multimolecular complexes. Interacts with AXIN1 and DIXDC1; interaction with DIXDC1 prevents interaction with AXIN1. Interacts with GADD45 and MAP2K6. Interacts with ZFP36; this interaction enhances the association with SH3KBP1/CIN85. Interacts with SH3KBP1; this interaction enhances the association with ZFP36. Mg(2+) serves as cofactor. As to expression, widely expressed. High expression was found in skeletal muscle, kidney, testis followed by heart brain and lung. Low expression was found in spleen.

Its subcellular location is the cytoplasm. The protein localises to the perinuclear region. It carries out the reaction L-seryl-[protein] + ATP = O-phospho-L-seryl-[protein] + ADP + H(+). It catalyses the reaction L-threonyl-[protein] + ATP = O-phospho-L-threonyl-[protein] + ADP + H(+). Its activity is regulated as follows. N-terminal autoinhibitory domain interacts with the C-terminal kinase domain, inhibiting kinase activity, and preventing interaction with its substrate, MAP2K6. The GADD45 proteins activate the kinase by binding to the N-terminal domain. Activated by phosphorylation on Thr-1494. In terms of biological role, component of a protein kinase signal transduction cascade. Activates the CSBP2, P38 and JNK MAPK pathways, but not the ERK pathway. Specifically phosphorylates and activates MAP2K4 and MAP2K6. This chain is Mitogen-activated protein kinase kinase kinase 4 (Map3k4), found in Mus musculus (Mouse).